The following is a 755-amino-acid chain: Polyribonucleotide nucleotidyltransferase (755 aa).

Mg(2+) contacts are provided by Asp482 and Asp488. In terms of domain architecture, KH spans 549–608 (PRMVSFYIDKDKISAAIGAKGKNIRSVCERSNAKIEIGDDGKVSVFAMSSAEAEIAKNMM). An S1 motif domain is found at 618–686 (GAIVDVKVVK…KGGCPKLSRR (69 aa)). Over residues 702–714 (NEEKKDSSNDRDY) the composition is skewed to basic and acidic residues. The tract at residues 702-755 (NEEKKDSSNDRDYYNSPFNRKSGHRKRPVHSRSSFSNRNNRPKFGNDDSSSSFY) is disordered. Basic residues predominate over residues 722-731 (KSGHRKRPVH).

The protein belongs to the polyribonucleotide nucleotidyltransferase family. Requires Mg(2+) as cofactor.

The protein localises to the cytoplasm. It carries out the reaction RNA(n+1) + phosphate = RNA(n) + a ribonucleoside 5'-diphosphate. Involved in mRNA degradation. Catalyzes the phosphorolysis of single-stranded polyribonucleotides processively in the 3'- to 5'-direction. This chain is Polyribonucleotide nucleotidyltransferase, found in Wolbachia sp. subsp. Brugia malayi (strain TRS).